The following is a 295-amino-acid chain: Small ribosomal subunit protein uS2 (295 aa).

This sequence belongs to the universal ribosomal protein uS2 family. Component of the small ribosomal subunit. Mature ribosomes consist of a small (40S) and a large (60S) subunit. The 40S subunit contains about 33 different proteins and 1 molecule of RNA (18S). The 60S subunit contains about 49 different proteins and 3 molecules of RNA (25S, 5.8S and 5S). Interacts with RPS21.

The protein resides in the cytoplasm. Functionally, required for the assembly and/or stability of the 40S ribosomal subunit. Required for the processing of the 20S rRNA-precursor to mature 18S rRNA in a late step of the maturation of 40S ribosomal subunits. The sequence is that of Small ribosomal subunit protein uS2 from Paracoccidioides brasiliensis (strain Pb18).